Here is a 222-residue protein sequence, read N- to C-terminus: UPF0316 protein Mboo_0791 (222 aa).

Helical transmembrane passes span 25–45 (FFLF…IFLA), 67–87 (LAPV…VGVL), and 93–113 (IAYF…GLVI).

It belongs to the UPF0316 family.

The protein localises to the cell membrane. This Methanoregula boonei (strain DSM 21154 / JCM 14090 / 6A8) protein is UPF0316 protein Mboo_0791.